We begin with the raw amino-acid sequence, 140 residues long: uncharacterized protein (140 aa).

This is an uncharacterized protein from Spirochaeta aurantia.